The chain runs to 290 residues: Endonuclease 2 (290 aa).

A signal peptide spans 1–27 (MANQKGLHVVMMIITVWLLYAAPNIHG). A divalent metal cation-binding residues include W28 and H33. Position 28 to 33 (28 to 33 (WGKEGH)) interacts with substrate. A disulfide bond links C37 and C68. A divalent metal cation contacts are provided by D72 and H85. Substrate-binding positions include 72 to 76 (DRVKF), 85 to 88 (HYIN), and 94 to 99 (SYQYNR). 3 disulfides stabilise this stretch: C93–C245, C101–C111, and C226–C232. Positions 118 and 136 each coordinate substrate. An N-linked (GlcNAc...) asparagine glycan is attached at N118. N137 carries an N-linked (GlcNAc...) asparagine glycan. A divalent metal cation is bound by residues H147, D151, H157, H181, and D185. The segment at 147 to 196 (HFMGDIHQPLHVSYASDKGGNTIEVHWYTRKANLHHIWDSNIIETAEADL) is substrate binding. N-linked (GlcNAc...) asparagine glycosylation is present at N211. Positions 283 to 290 (ATLNRIFG) are cleaved as a propeptide — removed in mature form.

Belongs to the nuclease type I family. In terms of assembly, monomer. Mn(2+) is required as a cofactor. Requires Ca(2+) as cofactor. The cofactor is Zn(2+). N-glycosylation is required for enzymatic stability and activity.

The catalysed reaction is Endonucleolytic cleavage to 5'-phosphomononucleotide and 5'-phosphooligonucleotide end-products.. SsDNase activity is inhibited by the divalent cation chelator EDTA and the reducing agent DTT. Divalent metal ions (e.g. Ca(2+), Mg(2+) and Zn(2+)) and DTT represses RNase activity. RNase activity is enhanced by EDTA. Also repressed by vanadate (VO(4)(3-)) and phosphate (PO(4)(3-)) by occupying the active site. Functionally, endonuclease mostly active on RNA and ssDNA, and to a lower extent, on dsDNA. Can cleave mismatch regions in heteroduplex DNA containing single base pair mismatches or insertion/deletion bases. In contradiction with PubMed:22506810, cannot hydrolyze single-stranded DNA and does not cleave mismatches. The protein is Endonuclease 2 of Arabidopsis thaliana (Mouse-ear cress).